Here is a 182-residue protein sequence, read N- to C-terminus: Large ribosomal subunit protein uL5 (182 aa).

Belongs to the universal ribosomal protein uL5 family. Part of the 50S ribosomal subunit; part of the 5S rRNA/L5/L18/L25 subcomplex. Contacts the 5S rRNA and the P site tRNA. Forms a bridge to the 30S subunit in the 70S ribosome.

Its function is as follows. This is one of the proteins that bind and probably mediate the attachment of the 5S RNA into the large ribosomal subunit, where it forms part of the central protuberance. In the 70S ribosome it contacts protein S13 of the 30S subunit (bridge B1b), connecting the 2 subunits; this bridge is implicated in subunit movement. Contacts the P site tRNA; the 5S rRNA and some of its associated proteins might help stabilize positioning of ribosome-bound tRNAs. This chain is Large ribosomal subunit protein uL5, found in Acidobacterium capsulatum (strain ATCC 51196 / DSM 11244 / BCRC 80197 / JCM 7670 / NBRC 15755 / NCIMB 13165 / 161).